The primary structure comprises 349 residues: tRNA N6-adenosine threonylcarbamoyltransferase (349 aa).

Residues His-111 and His-115 each coordinate Fe cation. Substrate-binding positions include Leu-134–Gly-138, Asp-167, Gly-180, Asp-184, and Asn-279. Asp-307 is a Fe cation binding site.

The protein belongs to the KAE1 / TsaD family. It depends on Fe(2+) as a cofactor.

The protein localises to the cytoplasm. It catalyses the reaction L-threonylcarbamoyladenylate + adenosine(37) in tRNA = N(6)-L-threonylcarbamoyladenosine(37) in tRNA + AMP + H(+). In terms of biological role, required for the formation of a threonylcarbamoyl group on adenosine at position 37 (t(6)A37) in tRNAs that read codons beginning with adenine. Is involved in the transfer of the threonylcarbamoyl moiety of threonylcarbamoyl-AMP (TC-AMP) to the N6 group of A37, together with TsaE and TsaB. TsaD likely plays a direct catalytic role in this reaction. The sequence is that of tRNA N6-adenosine threonylcarbamoyltransferase from Nostoc punctiforme (strain ATCC 29133 / PCC 73102).